A 75-amino-acid chain; its full sequence is Small ribosomal subunit protein bS18 (75 aa).

The protein belongs to the bacterial ribosomal protein bS18 family. In terms of assembly, part of the 30S ribosomal subunit. Forms a tight heterodimer with protein bS6.

Functionally, binds as a heterodimer with protein bS6 to the central domain of the 16S rRNA, where it helps stabilize the platform of the 30S subunit. This chain is Small ribosomal subunit protein bS18, found in Mycoplasma capricolum subsp. capricolum (strain California kid / ATCC 27343 / NCTC 10154).